The primary structure comprises 669 residues: MDQRKPPATEEGWYALHDCRSIDWDAWREAPQRVRDRALSEGIGFLDAYEAVEDADEGQTAVYTVMGHKADIMILHLRPTMGDLDAAERHFEQTEFAAFTEQEFSYVSVTEASGYTEKSREYFEGEVDDDSGLAQYIQARLHPDVPDEEFVCFYPMSKRRQPDQNWYDTSFEERAAHIKRHGDIGRGYGSEVSQMIAGSIGFDDWEWGITLWSDDMRHIKELLTEMRFDPSTSQFAEFGPFYVGRKFDPSELPAVLAGQRVPTDDASVPETPADVAEHEHAPADAGASHSHAEEPTASGAQTGAHAGGDTDSHGGTHPGSASEGDHPHSEESSDEDDSGSSSSSGGRPDVSADFEEIDDAAQRLGRLGLHEGDAYDAGDYALVFHSSADAEDIVDDVSDLESNFDHYDRHVQTAVRADSGQTYVVSIWTAKDAAETAAGFLKDIDGVDEQLGGSLGEGVEGSETADDSDAQAAESSQSIRETLESAGVYAGQPHGEDVYALVVYSEANAETLDEEVTDLRSAFERYDTHVQTTVYGDTDGDVAAVASLWDTEDAAQTASDYLTDLPGVVGRHGEGDGFGTMGMFYTVKPEYHEDFVEKFDTVGGLLKEMDGHRETSLLFNHDDENDMFIASQWDSQKDAMAFFRSDDFSETVDWGRDVLADRPRHVFLA.

Position 181 (His-181) interacts with heme. Disordered regions lie at residues 260–351 and 451–477; these read RVPT…PDVS and LGGSLGEGVEGSETADDSDAQAAESSQ. The ABM domain maps to 579 to 667; that stretch reads GTMGMFYTVK…VLADRPRHVF (89 aa).

This sequence in the N-terminal section; belongs to the ChdC family.

This is Putative heme-binding protein rrnAC3100 from Haloarcula marismortui (strain ATCC 43049 / DSM 3752 / JCM 8966 / VKM B-1809) (Halobacterium marismortui).